We begin with the raw amino-acid sequence, 416 residues long: Adenylosuccinate synthetase (416 aa).

GTP contacts are provided by residues 12–18 and 40–42; these read GDEGKGK and GHT. The Proton acceptor role is filled by Asp13. Positions 13 and 40 each coordinate Mg(2+). Residues 13 to 16, 38 to 41, Thr125, Arg139, Gln219, Thr234, and Arg298 contribute to the IMP site; these read DEGK and NAGH. His41 acts as the Proton donor in catalysis. 294–300 lines the substrate pocket; that stretch reads TVTGRKR. GTP is bound by residues Arg300, 326-328, and 404-406; these read KLD and STS.

This sequence belongs to the adenylosuccinate synthetase family. In terms of assembly, homodimer. Requires Mg(2+) as cofactor.

It localises to the cytoplasm. It carries out the reaction IMP + L-aspartate + GTP = N(6)-(1,2-dicarboxyethyl)-AMP + GDP + phosphate + 2 H(+). It functions in the pathway purine metabolism; AMP biosynthesis via de novo pathway; AMP from IMP: step 1/2. Plays an important role in the de novo pathway of purine nucleotide biosynthesis. Catalyzes the first committed step in the biosynthesis of AMP from IMP. The polypeptide is Adenylosuccinate synthetase (Aliarcobacter butzleri (strain RM4018) (Arcobacter butzleri)).